We begin with the raw amino-acid sequence, 362 residues long: MSQNSLRLVEDKSVDKSKALEAALSQIERSFGKGSIMKLGSNENVVEIETISTGSLGLDIALGVGGLPRGRIIEIYGPESSGKTTLALQTIAEAQKKGGICAFVDAEHALDPVYARKLGVDLQNLLISQPDTGEQALEITDTLVRSGAVDVLVVDSVAALTPRAEIEGEMGDSLPGLQARLMSQALRKLTASISKSNTMVIFINQIRMKIGVMFGSPETTTGGNALKFYASVRLDIRRIGAVKEREEVIGNQTRVKVVKNKMAPPFKQVEFDIMYGEGVSKTGELVDLGVKAGIVEKSGAWFSYNSQRLGQGRENAKTFLRDNPDLAREIELSLRQNAGLIADRFLQNGGPDPDDGDAAAEM.

ATP is bound at residue 77 to 84 (GPESSGKT).

Belongs to the RecA family.

The protein resides in the cytoplasm. Functionally, can catalyze the hydrolysis of ATP in the presence of single-stranded DNA, the ATP-dependent uptake of single-stranded DNA by duplex DNA, and the ATP-dependent hybridization of homologous single-stranded DNAs. It interacts with LexA causing its activation and leading to its autocatalytic cleavage. The sequence is that of Protein RecA from Rhizobium leguminosarum bv. trifolii (strain WSM2304).